Consider the following 134-residue polypeptide: DNA-directed RNA polymerase subunit omega (134 aa).

The segment at 77 to 108 (IDEPEPDPASLLAAGGNASASGDEEEDAPEAV) is disordered. Residues 85–97 (ASLLAAGGNASAS) are compositionally biased toward low complexity.

Belongs to the RNA polymerase subunit omega family. In terms of assembly, the RNAP catalytic core consists of 2 alpha, 1 beta, 1 beta' and 1 omega subunit. When a sigma factor is associated with the core the holoenzyme is formed, which can initiate transcription.

It carries out the reaction RNA(n) + a ribonucleoside 5'-triphosphate = RNA(n+1) + diphosphate. Its function is as follows. Promotes RNA polymerase assembly. Latches the N- and C-terminal regions of the beta' subunit thereby facilitating its interaction with the beta and alpha subunits. The protein is DNA-directed RNA polymerase subunit omega of Rhizobium rhizogenes (strain K84 / ATCC BAA-868) (Agrobacterium radiobacter).